Reading from the N-terminus, the 715-residue chain is MQKIVSFLKKKKEPNSWSNFDRSDDKSKSLSKKGSLYANGNYDGGGSGSGSGGSSSNSSGSSRKINTGGNNRNGGGMVHSPSNSSISSTSSNNSNSTTASSSSKLKGNKNRNSSGKQKNSSSQHQQYGNTYYLDDECDSDDFIPGEVRSISKTIDFSKSERKWLTSLNIPQELLDGNINVLLNVLNFLSKKEGILYIQTPTNIINNTGKKNFQQQQLQQLQQQQQQQQLQQQQHQQHNHQIYGNGNNNNLNVNVNVNGNNNNSNNNNGNYTSYVNSRSNSIASNNSSITPSTSCSNLNNDNNNNNNNNCTDNNSNNNNNNNNNNSTTTTTTITNTNVNMIGASNINSSKSNLNSLLLSGGSNGNGGVDNLSSTTTSLSQNPPIQPMRRSDYNRIFIEPGKFYIFPESESFALARLVVEEEDPSKLFRIGENAEVKGAFGTVYQVFYVNGQYNNVDVALKKMDHKSEKKRRNNLNEISILRYLKHPNIVTYINSYEKNDEEIWMVMEYMDGGTIRDAISNFTFTEKYVAYITKEILHSLEYLASLNIAHRDLKSSNIMINSKAEVKLIDFGFSIDLTHLKQDINMCGSPFYMSPEQIQDKAHGLAVDIWSLGIVVAEMVRGRVPHHKSKIKAMFLAGTVGVKFSKEKKYSCHWSPELFDFLNVCLQMDPTKRPTPTQLLQHPFIATAATKAETLDLLPLLFMSKTLSKLSRGRDNQ.

3 disordered regions span residues 1–125, 228–330, and 366–385; these read MQKI…SQHQ, QLQQ…TTTT, and GVDNLSSTTTSLSQNPPIQP. The span at 42–53 shows a compositional bias: gly residues; sequence YDGGGSGSGSGG. 2 stretches are compositionally biased toward low complexity: residues 54–70 and 80–125; these read SSSNSSGSSRKINTGGN and SPSN…SQHQ. Residues 207-241 adopt a coiled-coil conformation; sequence TGKKNFQQQQLQQLQQQQQQQQLQQQQHQQHNHQI. The span at 367 to 378 shows a compositional bias: low complexity; the sequence is VDNLSSTTTSLS. The region spanning 427-683 is the Protein kinase domain; that stretch reads RIGENAEVKG…PTQLLQHPFI (257 aa). Residues 433-441 and Lys-459 contribute to the ATP site; that span reads EVKGAFGTV. Asp-550 (proton acceptor) is an active-site residue.

Belongs to the protein kinase superfamily. STE Ser/Thr protein kinase family. STE20 subfamily. Requires Mg(2+) as cofactor.

The enzyme catalyses L-seryl-[protein] + ATP = O-phospho-L-seryl-[protein] + ADP + H(+). It carries out the reaction L-threonyl-[protein] + ATP = O-phospho-L-threonyl-[protein] + ADP + H(+). The protein is Probable serine/threonine-protein kinase mkcE of Dictyostelium discoideum (Social amoeba).